Consider the following 292-residue polypeptide: 33 kDa chaperonin (292 aa).

2 cysteine pairs are disulfide-bonded: cysteine 230–cysteine 232 and cysteine 263–cysteine 266.

Belongs to the HSP33 family. In terms of processing, under oxidizing conditions two disulfide bonds are formed involving the reactive cysteines. Under reducing conditions zinc is bound to the reactive cysteines and the protein is inactive.

It localises to the cytoplasm. Its function is as follows. Redox regulated molecular chaperone. Protects both thermally unfolding and oxidatively damaged proteins from irreversible aggregation. Plays an important role in the bacterial defense system toward oxidative stress. The sequence is that of 33 kDa chaperonin from Serratia proteamaculans (strain 568).